The sequence spans 390 residues: NADH-quinone oxidoreductase subunit H (390 aa).

The next 9 membrane-spanning stretches (helical) occupy residues 4–24 (WLLTLLITVVKAVAVILALLT), 78–98 (LVYTLAPIIAIGMALTAFGGI), 120–140 (VLALLALTSMGVYGIFLGGWA), 157–177 (MISYELGMGLSILGLLMLVGS), 191–211 (GWMILFQSLGFALFLISSFAE), 247–266 (YVNMITASALMSTLFFGGWR), 278–298 (IADIPILWLVVKIGFFLFVFI), 315–337 (FGWKLLLPLALFNTMLVAGYIAF), and 341–360 (WGWWPLALLSLLGLTALLAL).

Belongs to the complex I subunit 1 family. In terms of assembly, NDH-1 is composed of 15 different subunits. Subunits NuoA, H, J, K, L, M, N constitute the membrane sector of the complex.

Its subcellular location is the cell membrane. The catalysed reaction is a quinone + NADH + 5 H(+)(in) = a quinol + NAD(+) + 4 H(+)(out). Functionally, NDH-1 shuttles electrons from NADH, via FMN and iron-sulfur (Fe-S) centers, to quinones in the respiratory chain. The immediate electron acceptor for the enzyme in this species is believed to be ubiquinone. Couples the redox reaction to proton translocation (for every two electrons transferred, four hydrogen ions are translocated across the cytoplasmic membrane), and thus conserves the redox energy in a proton gradient. This subunit may bind ubiquinone. This is NADH-quinone oxidoreductase subunit H from Deinococcus deserti (strain DSM 17065 / CIP 109153 / LMG 22923 / VCD115).